A 244-amino-acid polypeptide reads, in one-letter code: Phosphoadenosine 5'-phosphosulfate reductase (244 aa).

Cys-239 serves as the catalytic Nucleophile; cysteine thiosulfonate intermediate.

The protein belongs to the PAPS reductase family. CysH subfamily.

It is found in the cytoplasm. It catalyses the reaction [thioredoxin]-disulfide + sulfite + adenosine 3',5'-bisphosphate + 2 H(+) = [thioredoxin]-dithiol + 3'-phosphoadenylyl sulfate. Its pathway is sulfur metabolism; hydrogen sulfide biosynthesis; sulfite from sulfate: step 3/3. Functionally, catalyzes the formation of sulfite from phosphoadenosine 5'-phosphosulfate (PAPS) using thioredoxin as an electron donor. This is Phosphoadenosine 5'-phosphosulfate reductase from Yersinia enterocolitica serotype O:8 / biotype 1B (strain NCTC 13174 / 8081).